The sequence spans 292 residues: Phosphoribosylaminoimidazole-succinocarboxamide synthase (292 aa).

It belongs to the SAICAR synthetase family.

It catalyses the reaction 5-amino-1-(5-phospho-D-ribosyl)imidazole-4-carboxylate + L-aspartate + ATP = (2S)-2-[5-amino-1-(5-phospho-beta-D-ribosyl)imidazole-4-carboxamido]succinate + ADP + phosphate + 2 H(+). Its pathway is purine metabolism; IMP biosynthesis via de novo pathway; 5-amino-1-(5-phospho-D-ribosyl)imidazole-4-carboxamide from 5-amino-1-(5-phospho-D-ribosyl)imidazole-4-carboxylate: step 1/2. The chain is Phosphoribosylaminoimidazole-succinocarboxamide synthase from Thermodesulfovibrio yellowstonii (strain ATCC 51303 / DSM 11347 / YP87).